Here is a 122-residue protein sequence, read N- to C-terminus: Large ribosomal subunit protein uL14 (122 aa).

This sequence belongs to the universal ribosomal protein uL14 family. Part of the 50S ribosomal subunit. Forms a cluster with proteins L3 and L19. In the 70S ribosome, L14 and L19 interact and together make contacts with the 16S rRNA in bridges B5 and B8.

Binds to 23S rRNA. Forms part of two intersubunit bridges in the 70S ribosome. The sequence is that of Large ribosomal subunit protein uL14 from Chloroflexus aurantiacus (strain ATCC 29366 / DSM 635 / J-10-fl).